The sequence spans 130 residues: Small ribosomal subunit protein uS8 (130 aa).

Belongs to the universal ribosomal protein uS8 family. Part of the 30S ribosomal subunit.

Its function is as follows. One of the primary rRNA binding proteins, it binds directly to 16S rRNA central domain where it helps coordinate assembly of the platform of the 30S subunit. This Pyrococcus abyssi (strain GE5 / Orsay) protein is Small ribosomal subunit protein uS8.